The sequence spans 288 residues: Pantothenate synthetase (288 aa).

30 to 37 (MGNLHEGH) lines the ATP pocket. His37 serves as the catalytic Proton donor. Gln61 provides a ligand contact to (R)-pantoate. Gln61 contacts beta-alanine. Residue 148–151 (GQKD) participates in ATP binding. Position 154 (Gln154) interacts with (R)-pantoate. ATP contacts are provided by residues Val177 and 185–188 (LSSR).

The protein belongs to the pantothenate synthetase family. In terms of assembly, homodimer.

It localises to the cytoplasm. It carries out the reaction (R)-pantoate + beta-alanine + ATP = (R)-pantothenate + AMP + diphosphate + H(+). The protein operates within cofactor biosynthesis; (R)-pantothenate biosynthesis; (R)-pantothenate from (R)-pantoate and beta-alanine: step 1/1. Its function is as follows. Catalyzes the condensation of pantoate with beta-alanine in an ATP-dependent reaction via a pantoyl-adenylate intermediate. This chain is Pantothenate synthetase, found in Psychrobacter arcticus (strain DSM 17307 / VKM B-2377 / 273-4).